Here is a 276-residue protein sequence, read N- to C-terminus: Adenylate kinase (276 aa).

51 to 56 (GAGKGT) contacts ATP. The tract at residues 71–100 (ATGDMLRSQVAKKTPLGQAAKKIMDAGGLV) is NMP. Residues T72, R77, 98-100 (GLV), 127-130 (GFPR), and Q134 each bind AMP. The segment at 168–205 (GRLVHPASGRSYHVKFNPPKKEMTDDITGEPLIQRSDD) is LID. Residues R169 and 178-179 (SY) each bind ATP. AMP-binding residues include R202 and R213. Q241 contacts ATP.

The protein belongs to the adenylate kinase family. AK2 subfamily. In terms of assembly, monomer.

It localises to the cytoplasm. The protein resides in the cytosol. The protein localises to the mitochondrion intermembrane space. The enzyme catalyses AMP + ATP = 2 ADP. Its function is as follows. Catalyzes the reversible transfer of the terminal phosphate group between ATP and AMP. Plays an important role in cellular energy homeostasis and in adenine nucleotide metabolism. Adenylate kinase activity is critical for regulation of the phosphate utilization and the AMP de novo biosynthesis pathways. This is Adenylate kinase from Podospora anserina (strain S / ATCC MYA-4624 / DSM 980 / FGSC 10383) (Pleurage anserina).